The sequence spans 141 residues: Hemoglobin subunit alpha (141 aa).

The region spanning Val1 to Arg141 is the Globin domain. Ser3 is modified (phosphoserine). Lys7 is subject to N6-succinyllysine. Phosphothreonine is present on Thr8. The residue at position 11 (Lys11) is an N6-succinyllysine. The residue at position 16 (Lys16) is an N6-acetyllysine; alternate. N6-succinyllysine; alternate is present on Lys16. A Phosphotyrosine modification is found at Tyr24. Ser35 carries the phosphoserine modification. N6-succinyllysine is present on Lys40. Ser49 carries the phosphoserine modification. His58 serves as a coordination point for O2. His87 serves as a coordination point for heme b. Ser102 is subject to Phosphoserine. Position 108 is a phosphothreonine (Thr108). Phosphoserine is present on residues Ser124 and Ser131. A phosphothreonine mark is found at Thr134 and Thr137. Residue Ser138 is modified to Phosphoserine.

Belongs to the globin family. As to quaternary structure, heterotetramer of two alpha chains and two beta chains. In terms of tissue distribution, red blood cells.

Its function is as follows. Involved in oxygen transport from the lung to the various peripheral tissues. In terms of biological role, hemopressin acts as an antagonist peptide of the cannabinoid receptor CNR1. Hemopressin-binding efficiently blocks cannabinoid receptor CNR1 and subsequent signaling. In Semnopithecus entellus (Northern plains gray langur), this protein is Hemoglobin subunit alpha (HBA).